The primary structure comprises 234 residues: MRMIKFLLLAILLAPFVAHSSGQEVKLDKAPIDRADKESLQRGAKGFVEYCLTCHGANFMRFNRHHDIGMSEDDIRADLIHTGQKTGDLMEAAMRKKEAEGWFGVVPPDLSVIARARGADWLYTYLRTFYQDTSTYSGWNNLIFDKVAMPHVLHHLQGWQVLEPGTGNLVQTKPGTMTKEEYDRFVADLVNYMVYLGEPHAPYRRELGITVLLFLFGMLGLTYLLKKEYWRDIH.

An N-terminal signal peptide occupies residues 1 to 20; the sequence is MRMIKFLLLAILLAPFVAHS. Residues 38–193 enclose the Cytochrome c domain; it reads ESLQRGAKGF…RFVADLVNYM (156 aa). Cys51, Cys54, and His55 together coordinate heme c. The helical transmembrane segment at 206-226 threads the bilayer; sequence ELGITVLLFLFGMLGLTYLLK.

Belongs to the cytochrome c family. As to quaternary structure, the soluble ammonia monooxygenase is a nonamer composed of three alpha subunits (AmoA), three beta subunits (AmoB) and three gamma subunits (Cytochrome c1 PetC). It depends on heme c as a cofactor.

The protein localises to the cell membrane. The protein resides in the cytoplasm. Functionally, part of the ammonia monooxygenase complex, which catalyzes the oxidation of ammonia to hydroxylamine, the first reaction in the process of ammonia oxidation to nitrite. The polypeptide is Ammonia monooxygenase gamma subunit (Nitrosomonas europaea (strain ATCC 19718 / CIP 103999 / KCTC 2705 / NBRC 14298)).